The chain runs to 228 residues: Ribonuclease 3 (228 aa).

The 123-residue stretch at 5–127 (KDALQDRLGY…LFGAIYLDGG (123 aa)) folds into the RNase III domain. A Mg(2+)-binding site is contributed by Glu-40. Asp-44 is a catalytic residue. Mg(2+) contacts are provided by Asp-113 and Glu-116. Glu-116 is a catalytic residue. Residues 154-224 (DPKTRLQEHL…AEQMLKRLED (71 aa)) enclose the DRBM domain. Residues 200 to 228 (AEGEAGSRRKAEQQAAEQMLKRLEDKHER) are disordered. Over residues 218–228 (MLKRLEDKHER) the composition is skewed to basic and acidic residues.

It belongs to the ribonuclease III family. Homodimer. Mg(2+) serves as cofactor.

It localises to the cytoplasm. It carries out the reaction Endonucleolytic cleavage to 5'-phosphomonoester.. In terms of biological role, digests double-stranded RNA. Involved in the processing of primary rRNA transcript to yield the immediate precursors to the large and small rRNAs (23S and 16S). Processes some mRNAs, and tRNAs when they are encoded in the rRNA operon. Processes pre-crRNA and tracrRNA of type II CRISPR loci if present in the organism. This Alkalilimnicola ehrlichii (strain ATCC BAA-1101 / DSM 17681 / MLHE-1) protein is Ribonuclease 3.